The primary structure comprises 288 residues: Homoserine kinase (288 aa).

Residue 79 to 89 coordinates ATP; it reads PLARGLGSSSS.

Belongs to the GHMP kinase family. Homoserine kinase subfamily.

It localises to the cytoplasm. It carries out the reaction L-homoserine + ATP = O-phospho-L-homoserine + ADP + H(+). It participates in amino-acid biosynthesis; L-threonine biosynthesis; L-threonine from L-aspartate: step 4/5. Functionally, catalyzes the ATP-dependent phosphorylation of L-homoserine to L-homoserine phosphate. The sequence is that of Homoserine kinase from Streptococcus sanguinis (strain SK36).